Reading from the N-terminus, the 263-residue chain is Triosephosphate isomerase (263 aa).

N10–K12 lines the substrate pocket. H104 (electrophile) is an active-site residue. E176 functions as the Proton acceptor in the catalytic mechanism. Substrate is bound by residues G182, S221, and G242–G243.

This sequence belongs to the triosephosphate isomerase family. As to quaternary structure, homodimer.

Its subcellular location is the cytoplasm. The catalysed reaction is D-glyceraldehyde 3-phosphate = dihydroxyacetone phosphate. It functions in the pathway carbohydrate biosynthesis; gluconeogenesis. The protein operates within carbohydrate degradation; glycolysis; D-glyceraldehyde 3-phosphate from glycerone phosphate: step 1/1. Involved in the gluconeogenesis. Catalyzes stereospecifically the conversion of dihydroxyacetone phosphate (DHAP) to D-glyceraldehyde-3-phosphate (G3P). The chain is Triosephosphate isomerase from Haemophilus influenzae (strain PittEE).